The chain runs to 631 residues: E3 ubiquitin-protein ligase Zswim2 (631 aa).

An SWIM-type zinc finger spans residues 54 to 87 (FRVLLGNPHECSCPTFLKRGELCKHICWVLLKKF). The tract at residues 139-348 (KDINAGDICP…APGYQCRLCL (210 aa)) is UBE2D1-binding. Residues 147–199 (CPICQEVLLEKKLPVTFCRFGCGNNVHIKCMRILANYQDTGSDSSVLRCPLCR) form an RING-type 1 zinc finger. The ZZ-type zinc-finger motif lies at 230 to 281 (HLGIPCNNCNQLPIEGRCYKCTECVEYHLCQECFDSCCHSSHAFASREKRNQ). Zn(2+)-binding residues include cysteine 235, cysteine 238, cysteine 250, cysteine 253, cysteine 259, cysteine 262, histidine 268, and histidine 271. The RING-type 2 zinc finger occupies 344–386 (CRLCLKSFSFGQYTRLLPCTHKFHRKCIDNWLLHKCNSCPIDR). Residues 589–614 (SKRQNNSMGKVRQKLGHPPRRPAYPP) are disordered. Positions 599–608 (VRQKLGHPPR) are enriched in basic residues.

In terms of assembly, dimer. Interacts with UBE2D1. Polyubiquitinated. Polyubiquitination is followed by degradation via the proteasome. In terms of tissue distribution, expressed only in testis.

The catalysed reaction is S-ubiquitinyl-[E2 ubiquitin-conjugating enzyme]-L-cysteine + [acceptor protein]-L-lysine = [E2 ubiquitin-conjugating enzyme]-L-cysteine + N(6)-ubiquitinyl-[acceptor protein]-L-lysine.. Functionally, E3 ubiquitin-protein ligase involved in the regulation of Fas-, DR3- and DR4-mediated apoptosis. Functions in conjunction with the UBE2D1, UBE2D3 and UBE2E1 E2 ubiquitin-conjugating enzymes. The polypeptide is E3 ubiquitin-protein ligase Zswim2 (Zswim2) (Mus musculus (Mouse)).